Consider the following 128-residue polypeptide: Large ribosomal subunit protein eL31 (128 aa).

This sequence belongs to the eukaryotic ribosomal protein eL31 family.

The sequence is that of Large ribosomal subunit protein eL31 (RpL31) from Drosophila virilis (Fruit fly).